A 96-amino-acid polypeptide reads, in one-letter code: UPF0251 protein Spea_3639 (96 aa).

The protein belongs to the UPF0251 family.

The polypeptide is UPF0251 protein Spea_3639 (Shewanella pealeana (strain ATCC 700345 / ANG-SQ1)).